The primary structure comprises 427 residues: Glutamyl-tRNA reductase (427 aa).

Substrate-binding positions include 50–53 (TCNR), Ser110, 115–117 (ETQ), and Gln121. The active-site Nucleophile is the Cys51. 190–195 (GAGEMG) is an NADP(+) binding site.

The protein belongs to the glutamyl-tRNA reductase family. In terms of assembly, homodimer.

The enzyme catalyses (S)-4-amino-5-oxopentanoate + tRNA(Glu) + NADP(+) = L-glutamyl-tRNA(Glu) + NADPH + H(+). It participates in porphyrin-containing compound metabolism; protoporphyrin-IX biosynthesis; 5-aminolevulinate from L-glutamyl-tRNA(Glu): step 1/2. In terms of biological role, catalyzes the NADPH-dependent reduction of glutamyl-tRNA(Glu) to glutamate 1-semialdehyde (GSA). The polypeptide is Glutamyl-tRNA reductase (Campylobacter concisus (strain 13826)).